A 417-amino-acid polypeptide reads, in one-letter code: Inactive cytochrome P450 76AD1 (417 aa).

A helical membrane pass occupies residues Ala-4 to Phe-24.

Belongs to the cytochrome P450 family.

The protein localises to the membrane. It functions in the pathway pigment biosynthesis; betalain biosynthesis. Inactive cytochrome unable to convert L-DOPA to cyclo-DOPA in the betalain pathway and producing a yellow mutant phenotype. A frameshift replaces 108 amino acids of the active protein found in red beets (AC I3PFJ5) with 27 new residues followed by a stop codon. This Beta vulgaris (Sugar beet) protein is Inactive cytochrome P450 76AD1.